The primary structure comprises 352 residues: Gap junction alpha-4 protein (352 aa).

The Cytoplasmic segment spans residues 2–23; the sequence is GDWEFLEKLLDQVQEHSTSIGK. Residues 24-46 form a helical membrane-spanning segment; that stretch reads IWLMVLFIFRILILGLAGESVWG. Residues 47-76 are Extracellular-facing; sequence DEQSDFTCNTEQPGCTNVCYDKAFPISHVR. A helical membrane pass occupies residues 77–99; that stretch reads YWVLQFLFVSTPTLFYLGHVIYL. Residues 100 to 153 are Cytoplasmic-facing; it reads SRKEEKLKQKESELRALDDKEQVEQAIAIIEKKKLKLYIQEDGTVKIKGALMYT. Residues 154 to 176 form a helical membrane-spanning segment; that stretch reads YLTSVIFKSIFEAGFLLGQWYLY. At 177-208 the chain is on the extracellular side; sequence GFVMTPIYVCERVPCPHKVDCFVSRPMEKTIF. The helical transmembrane segment at 209 to 231 threads the bilayer; sequence IIFMLVVSLISLFLNVLELIHLI. Topologically, residues 232–352 are cytoplasmic; sequence CKSMIHALKK…SSSASKKQYV (121 aa). Positions 332-352 are disordered; the sequence is HSTVEKASTRASSSASKKQYV. The segment covering 340–352 has biased composition (low complexity); the sequence is TRASSSASKKQYV.

The protein belongs to the connexin family. Alpha-type (group II) subfamily. A connexon is composed of a hexamer of connexins. As to expression, expressed in ovarian somatic cells, heart, leg muscle, liver and eye but not in brain.

Its subcellular location is the cell membrane. It localises to the cell junction. The protein localises to the gap junction. In terms of biological role, one gap junction consists of a cluster of closely packed pairs of transmembrane channels, the connexons, through which materials of low MW diffuse from one cell to a neighboring cell. The chain is Gap junction alpha-4 protein (gja4) from Xenopus laevis (African clawed frog).